The chain runs to 261 residues: 6-carboxyhexanoate--CoA ligase (261 aa).

Belongs to the BioW family. In terms of assembly, homodimer. Requires Mg(2+) as cofactor.

The enzyme catalyses heptanedioate + ATP + CoA = 6-carboxyhexanoyl-CoA + AMP + diphosphate. It participates in metabolic intermediate metabolism; pimeloyl-CoA biosynthesis; pimeloyl-CoA from pimelate: step 1/1. Its function is as follows. Catalyzes the transformation of pimelate into pimeloyl-CoA with concomitant hydrolysis of ATP to AMP. The chain is 6-carboxyhexanoate--CoA ligase from Bacillus licheniformis (strain ATCC 14580 / DSM 13 / JCM 2505 / CCUG 7422 / NBRC 12200 / NCIMB 9375 / NCTC 10341 / NRRL NRS-1264 / Gibson 46).